The following is a 121-amino-acid chain: Small ribosomal subunit protein uS13 (121 aa).

Residues 93-121 (RGLPVRGQNSKNNARTRKGPRRTVANKKK) form a disordered region. Over residues 106–121 (ARTRKGPRRTVANKKK) the composition is skewed to basic residues.

Belongs to the universal ribosomal protein uS13 family. Part of the 30S ribosomal subunit. Forms a loose heterodimer with protein S19. Forms two bridges to the 50S subunit in the 70S ribosome.

Located at the top of the head of the 30S subunit, it contacts several helices of the 16S rRNA. In the 70S ribosome it contacts the 23S rRNA (bridge B1a) and protein L5 of the 50S subunit (bridge B1b), connecting the 2 subunits; these bridges are implicated in subunit movement. Contacts the tRNAs in the A and P-sites. The polypeptide is Small ribosomal subunit protein uS13 (Bacillus subtilis (strain 168)).